Consider the following 492-residue polypeptide: Tumor necrosis factor receptor superfamily member 8 (492 aa).

The N-terminal stretch at 1 to 18 is a signal peptide; it reads MSILLKAAGLLFLGMLQA. Over 19-282 the chain is Extracellular; the sequence is FPKDRPLDTT…STGTPFLDPG (264 aa). TNFR-Cys repeat units follow at residues 57–104 and 105–141; these read PCPQ…PRIC and ECQP…NTIC. Intrachain disulfides connect C58–C80, C83–C96, C86–C104, and C123–C141. Positions 141–178 are disordered; sequence CDLPSPGSGPNGSNPDDCKTLTSHTTPQAIPTLESPAN. The segment covering 144–155 has biased composition (low complexity); sequence PSPGSGPNGSNP. N151, N178, and N224 each carry an N-linked (GlcNAc...) asparagine glycan. The span at 160–178 shows a compositional bias: polar residues; it reads TLTSHTTPQAIPTLESPAN. Residues 283–303 form a helical membrane-spanning segment; sequence SMLFWVAMVVLLVGSASFLLC. Residues 304–492 lie on the Cytoplasmic side of the membrane; sequence YWKACRRRFQ…DHEPTTVSEK (189 aa). 2 positions are modified to phosphoserine: S334 and S348. 2 disordered regions span residues 336 to 366 and 432 to 492; these read PTEK…PPAV and PEGR…VSEK. The segment covering 339–360 has biased composition (polar residues); that stretch reads KLTQLQRSGSVTDSSAGHTLSP. Composition is skewed to basic and acidic residues over residues 450 to 459 and 478 to 492; these read EVDHTPHYPE and EGGK…VSEK.

Belongs to the TNFR8 family. In terms of assembly, interacts with TRAF1, TRAF2, TRAF3 and TRAF5. As to expression, very low level of expression. Detected in spleen, thymus and lung. Highly expressed in HTLV-1 infected T-cell lines.

Its subcellular location is the cell membrane. Its function is as follows. Receptor for TNFSF8/CD30L. May play a role in the regulation of cellular growth and transformation of activated lymphoblasts. Regulates gene expression through activation of NF-kappa-B. In Rattus norvegicus (Rat), this protein is Tumor necrosis factor receptor superfamily member 8.